Reading from the N-terminus, the 455-residue chain is Bifunctional protein GlmU (455 aa).

Residues 1-228 (MYKCALVLAA…FEETIGVNSR (228 aa)) are pyrophosphorylase. UDP-N-acetyl-alpha-D-glucosamine contacts are provided by residues 8–11 (LAAG), K22, Q73, and 78–79 (GT). D103 provides a ligand contact to Mg(2+). UDP-N-acetyl-alpha-D-glucosamine-binding residues include G140, E154, N169, and N226. N226 provides a ligand contact to Mg(2+). Positions 229–249 (AQLAQAEEILKDRINLKHMEN) are linker. Residues 250–455 (GVTLIDPKTT…GWVDKKGLKK (206 aa)) form an N-acetyltransferase region. Positions 331 and 349 each coordinate UDP-N-acetyl-alpha-D-glucosamine. The active-site Proton acceptor is the H361. Positions 364 and 375 each coordinate UDP-N-acetyl-alpha-D-glucosamine. Acetyl-CoA-binding positions include 384–385 (NY), A421, and R438.

In the N-terminal section; belongs to the N-acetylglucosamine-1-phosphate uridyltransferase family. The protein in the C-terminal section; belongs to the transferase hexapeptide repeat family. Homotrimer. Mg(2+) is required as a cofactor.

The protein localises to the cytoplasm. It carries out the reaction alpha-D-glucosamine 1-phosphate + acetyl-CoA = N-acetyl-alpha-D-glucosamine 1-phosphate + CoA + H(+). The catalysed reaction is N-acetyl-alpha-D-glucosamine 1-phosphate + UTP + H(+) = UDP-N-acetyl-alpha-D-glucosamine + diphosphate. It functions in the pathway nucleotide-sugar biosynthesis; UDP-N-acetyl-alpha-D-glucosamine biosynthesis; N-acetyl-alpha-D-glucosamine 1-phosphate from alpha-D-glucosamine 6-phosphate (route II): step 2/2. Its pathway is nucleotide-sugar biosynthesis; UDP-N-acetyl-alpha-D-glucosamine biosynthesis; UDP-N-acetyl-alpha-D-glucosamine from N-acetyl-alpha-D-glucosamine 1-phosphate: step 1/1. The protein operates within bacterial outer membrane biogenesis; LPS lipid A biosynthesis. Catalyzes the last two sequential reactions in the de novo biosynthetic pathway for UDP-N-acetylglucosamine (UDP-GlcNAc). The C-terminal domain catalyzes the transfer of acetyl group from acetyl coenzyme A to glucosamine-1-phosphate (GlcN-1-P) to produce N-acetylglucosamine-1-phosphate (GlcNAc-1-P), which is converted into UDP-GlcNAc by the transfer of uridine 5-monophosphate (from uridine 5-triphosphate), a reaction catalyzed by the N-terminal domain. This is Bifunctional protein GlmU from Clostridium botulinum (strain Eklund 17B / Type B).